Here is a 476-residue protein sequence, read N- to C-terminus: Probable rhodanese domain-containing dual specificity protein phosphatase (476 aa).

The Rhodanese domain maps to 32 to 190 (IGSSKIIIDL…FQKDYSFMCN (159 aa)). The Tyrosine-protein phosphatase domain occupies 208–350 (YPSEIIKDFL…LKDYQQHLTL (143 aa)). The Phosphocysteine intermediate role is filled by C294. Low complexity predominate over residues 425–436 (KTTTSSTTINNK). The interval 425-476 (KTTTSSTTINNKGQQQDKAQEEKDSIFSYADKQEKMTHPTLHSPIELPQSSL) is disordered. The span at 442–461 (KAQEEKDSIFSYADKQEKMT) shows a compositional bias: basic and acidic residues.

Belongs to the protein-tyrosine phosphatase family. Non-receptor class dual specificity subfamily.

The enzyme catalyses O-phospho-L-tyrosyl-[protein] + H2O = L-tyrosyl-[protein] + phosphate. It carries out the reaction O-phospho-L-seryl-[protein] + H2O = L-seryl-[protein] + phosphate. The catalysed reaction is O-phospho-L-threonyl-[protein] + H2O = L-threonyl-[protein] + phosphate. Its function is as follows. Has a dual specificity toward Ser/Thr and Tyr-containing proteins. The polypeptide is Probable rhodanese domain-containing dual specificity protein phosphatase (Dictyostelium discoideum (Social amoeba)).